Here is a 240-residue protein sequence, read N- to C-terminus: Probable septum site-determining protein MinC (240 aa).

This sequence belongs to the MinC family. Interacts with MinD and FtsZ.

Functionally, cell division inhibitor that blocks the formation of polar Z ring septums. Rapidly oscillates between the poles of the cell to destabilize FtsZ filaments that have formed before they mature into polar Z rings. Prevents FtsZ polymerization. This is Probable septum site-determining protein MinC from Acinetobacter baumannii (strain AYE).